The following is a 238-amino-acid chain: DNA repair protein RecO (238 aa).

The protein belongs to the RecO family.

Functionally, involved in DNA repair and RecF pathway recombination. In Flavobacterium psychrophilum (strain ATCC 49511 / DSM 21280 / CIP 103535 / JIP02/86), this protein is DNA repair protein RecO.